We begin with the raw amino-acid sequence, 395 residues long: Probable inactive serine/threonine-protein kinase DDB_G0293746 (395 aa).

The Protein kinase domain maps to 9–395; that stretch reads YSEIDLISDN…ITQFIIDYLF (387 aa). Residues 15 to 23 and K54 each bind ATP; that span reads ISDNPFKNY. The segment at 213–266 is disordered; it reads NSSLSSLSSSTSSSSSSSSSTNCNNNTTENNNNNYNNNNNNNNNNNNNNNNNSL.

The protein belongs to the protein kinase superfamily. Ser/Thr protein kinase family.

The chain is Probable inactive serine/threonine-protein kinase DDB_G0293746 from Dictyostelium discoideum (Social amoeba).